A 264-amino-acid polypeptide reads, in one-letter code: NAD kinase (264 aa).

The active-site Proton acceptor is the aspartate 45. Residues 45–46 (DG), histidine 50, 121–122 (NE), arginine 147, aspartate 149, alanine 184, and glutamine 224 each bind NAD(+).

Belongs to the NAD kinase family. The cofactor is a divalent metal cation.

It localises to the cytoplasm. It carries out the reaction NAD(+) + ATP = ADP + NADP(+) + H(+). Functionally, involved in the regulation of the intracellular balance of NAD and NADP, and is a key enzyme in the biosynthesis of NADP. Catalyzes specifically the phosphorylation on 2'-hydroxyl of the adenosine moiety of NAD to yield NADP. The protein is NAD kinase of Lysinibacillus sphaericus (strain C3-41).